The primary structure comprises 401 residues: Argininosuccinate synthase (401 aa).

Residue Ala-9–Ser-17 participates in ATP binding. Tyr-86 contributes to the L-citrulline binding site. Gly-116 lines the ATP pocket. Residues Thr-118, Asn-122, and Asp-123 each coordinate L-aspartate. An L-citrulline-binding site is contributed by Asn-122. L-citrulline-binding residues include Arg-126, Ser-174, Ser-183, Glu-259, and Tyr-271.

It belongs to the argininosuccinate synthase family. Type 1 subfamily. Homotetramer.

The protein localises to the cytoplasm. The catalysed reaction is L-citrulline + L-aspartate + ATP = 2-(N(omega)-L-arginino)succinate + AMP + diphosphate + H(+). It participates in amino-acid biosynthesis; L-arginine biosynthesis; L-arginine from L-ornithine and carbamoyl phosphate: step 2/3. The sequence is that of Argininosuccinate synthase from Bacillus cereus (strain B4264).